The following is a 317-amino-acid chain: Protein-methionine-sulfoxide reductase catalytic subunit MsrP (317 aa).

The segment at residues 1 to 40 is a signal peptide (tat-type signal); the sequence is MKKLTSNDVTPEEIFYQRRKIIKAFGLSAVATALPTFSFA. Mo-molybdopterin-binding positions include Asn71, 74-75, Cys129, Thr164, Asn216, Arg221, and 232-234; these read YE and SIK.

It belongs to the MsrP family. As to quaternary structure, heterodimer of a catalytic subunit (MsrP) and a heme-binding subunit (MsrQ). Mo-molybdopterin serves as cofactor. In terms of processing, predicted to be exported by the Tat system. The position of the signal peptide cleavage has not been experimentally proven.

It localises to the periplasm. The catalysed reaction is L-methionyl-[protein] + a quinone + H2O = L-methionyl-(S)-S-oxide-[protein] + a quinol. It carries out the reaction L-methionyl-[protein] + a quinone + H2O = L-methionyl-(R)-S-oxide-[protein] + a quinol. Part of the MsrPQ system that repairs oxidized periplasmic proteins containing methionine sulfoxide residues (Met-O), using respiratory chain electrons. Thus protects these proteins from oxidative-stress damage caused by reactive species of oxygen and chlorine generated by the host defense mechanisms. MsrPQ is essential for the maintenance of envelope integrity under bleach stress, rescuing a wide series of structurally unrelated periplasmic proteins from methionine oxidation. The catalytic subunit MsrP is non-stereospecific, being able to reduce both (R-) and (S-) diastereoisomers of methionine sulfoxide. This is Protein-methionine-sulfoxide reductase catalytic subunit MsrP from Histophilus somni (strain 2336) (Haemophilus somnus).